The following is a 540-amino-acid chain: GMP synthase [glutamine-hydrolyzing] (540 aa).

The Glutamine amidotransferase type-1 domain occupies 26–216; that stretch reads IIIILDFGSQ…VYHICECEPT (191 aa). Catalysis depends on C103, which acts as the Nucleophile. Active-site residues include H190 and E192. The 199-residue stretch at 217–415 folds into the GMPS ATP-PPase domain; that stretch reads WTTAAFVEEA…VGLPEEIVQR (199 aa). 244–250 contributes to the ATP binding site; the sequence is SGGVDSS.

In terms of assembly, homodimer.

It catalyses the reaction XMP + L-glutamine + ATP + H2O = GMP + L-glutamate + AMP + diphosphate + 2 H(+). Its pathway is purine metabolism; GMP biosynthesis; GMP from XMP (L-Gln route): step 1/1. Catalyzes the synthesis of GMP from XMP. In Trichormus variabilis (strain ATCC 29413 / PCC 7937) (Anabaena variabilis), this protein is GMP synthase [glutamine-hydrolyzing].